A 365-amino-acid polypeptide reads, in one-letter code: Chorismate synthase (365 aa).

Arg-46 is an NADP(+) binding site. Residues Arg-124–Ser-126, Gly-284, Lys-299–Ser-303, and Arg-326 contribute to the FMN site.

This sequence belongs to the chorismate synthase family. The cofactor is FMNH2.

It carries out the reaction 5-O-(1-carboxyvinyl)-3-phosphoshikimate = chorismate + phosphate. It participates in metabolic intermediate biosynthesis; chorismate biosynthesis; chorismate from D-erythrose 4-phosphate and phosphoenolpyruvate: step 7/7. Catalyzes the anti-1,4-elimination of the C-3 phosphate and the C-6 proR hydrogen from 5-enolpyruvylshikimate-3-phosphate (EPSP) to yield chorismate, which is the branch point compound that serves as the starting substrate for the three terminal pathways of aromatic amino acid biosynthesis. This reaction introduces a second double bond into the aromatic ring system. The sequence is that of Chorismate synthase from Pyrobaculum islandicum (strain DSM 4184 / JCM 9189 / GEO3).